The sequence spans 290 residues: Bifunctional protein FolD (290 aa).

NADP(+) contacts are provided by residues 167-169, Ser-192, and Ile-233; that span reads GRS.

Belongs to the tetrahydrofolate dehydrogenase/cyclohydrolase family. In terms of assembly, homodimer.

The catalysed reaction is (6R)-5,10-methylene-5,6,7,8-tetrahydrofolate + NADP(+) = (6R)-5,10-methenyltetrahydrofolate + NADPH. The enzyme catalyses (6R)-5,10-methenyltetrahydrofolate + H2O = (6R)-10-formyltetrahydrofolate + H(+). It functions in the pathway one-carbon metabolism; tetrahydrofolate interconversion. Catalyzes the oxidation of 5,10-methylenetetrahydrofolate to 5,10-methenyltetrahydrofolate and then the hydrolysis of 5,10-methenyltetrahydrofolate to 10-formyltetrahydrofolate. The chain is Bifunctional protein FolD from Azorhizobium caulinodans (strain ATCC 43989 / DSM 5975 / JCM 20966 / LMG 6465 / NBRC 14845 / NCIMB 13405 / ORS 571).